A 105-amino-acid polypeptide reads, in one-letter code: Cytochrome c-553-like (105 aa).

The N-terminal stretch at 1–29 (MAGIVSLVILAVALFSFMNFDPYVSQVLA) is a signal peptide. Residues cysteine 45, cysteine 48, histidine 49, and methionine 85 each coordinate heme c.

Post-translationally, binds 1 heme c group covalently per subunit.

This is Cytochrome c-553-like (cytM) from Synechocystis sp. (strain ATCC 27184 / PCC 6803 / Kazusa).